Reading from the N-terminus, the 210-residue chain is Prolactin (210 aa).

The signal sequence occupies residues 1–23 (MAEGSRLYFAVTVLMCAFVSING). Intrachain disulfides connect cysteine 69–cysteine 183 and cysteine 200–cysteine 210.

This sequence belongs to the somatotropin/prolactin family. As to expression, pituitary gland.

It localises to the secreted. This Hypophthalmichthys nobilis (Bighead carp) protein is Prolactin (prl).